The chain runs to 206 residues: Outer-membrane lipoprotein carrier protein (206 aa).

Residues 1–23 (MKPLFPMLTAAAIAAGLAAPAQA) form the signal peptide.

It belongs to the LolA family. In terms of assembly, monomer.

The protein localises to the periplasm. Participates in the translocation of lipoproteins from the inner membrane to the outer membrane. Only forms a complex with a lipoprotein if the residue after the N-terminal Cys is not an aspartate (The Asp acts as a targeting signal to indicate that the lipoprotein should stay in the inner membrane). This is Outer-membrane lipoprotein carrier protein from Chromobacterium violaceum (strain ATCC 12472 / DSM 30191 / JCM 1249 / CCUG 213 / NBRC 12614 / NCIMB 9131 / NCTC 9757 / MK).